We begin with the raw amino-acid sequence, 270 residues long: Putative ABC transporter ATP-binding protein MG304 (270 aa).

One can recognise an ABC transporter domain in the interval 1 to 232; the sequence is MLQVKNLSFK…LDLFHNHHFN (232 aa). Position 36–43 (36–43) interacts with ATP; it reads GHNGSGKS.

It belongs to the ABC transporter superfamily.

This Mycoplasma genitalium (strain ATCC 33530 / DSM 19775 / NCTC 10195 / G37) (Mycoplasmoides genitalium) protein is Putative ABC transporter ATP-binding protein MG304.